The chain runs to 453 residues: Divalent metal cation transporter MntH (453 aa).

Helical transmembrane passes span 39-59 (LAFL…GNWI), 66-86 (AQYG…AMLL), 114-134 (AIMF…AEVI), 146-166 (IPLI…LFIM), 175-195 (AIVG…VYIS), 217-237 (GILY…NLYL), 270-290 (LSIA…LFFG), 310-330 (PALG…ALLA), 362-382 (LITR…FKGN), 388-408 (QLLV…LIPL), and 427-447 (INII…YLII).

It belongs to the NRAMP family.

It is found in the cell membrane. In terms of biological role, h(+)-stimulated, divalent metal cation uptake system. This Staphylococcus epidermidis (strain ATCC 12228 / FDA PCI 1200) protein is Divalent metal cation transporter MntH.